An 87-amino-acid polypeptide reads, in one-letter code: Small ribosomal subunit protein uS17 (87 aa).

This sequence belongs to the universal ribosomal protein uS17 family. Part of the 30S ribosomal subunit.

One of the primary rRNA binding proteins, it binds specifically to the 5'-end of 16S ribosomal RNA. This chain is Small ribosomal subunit protein uS17, found in Geobacillus sp. (strain WCH70).